Reading from the N-terminus, the 33-residue chain is Photosystem II reaction center protein Psb30 (33 aa).

The helical transmembrane segment at 7–27 (IQLGSLTLITLTGPLIIGIIF) threads the bilayer.

The protein belongs to the Psb30/Ycf12 family. PSII is composed of 1 copy each of membrane proteins PsbA, PsbB, PsbC, PsbD, PsbE, PsbF, PsbH, PsbI, PsbJ, PsbK, PsbL, PsbM, PsbT, PsbY, PsbZ, Psb30/Ycf12, peripheral proteins of the oxygen-evolving complex and a large number of cofactors. It forms dimeric complexes.

It is found in the plastid. The protein resides in the chloroplast thylakoid membrane. In terms of biological role, a core subunit of photosystem II (PSII), probably helps stabilize the reaction center. In Euglena gracilis, this protein is Photosystem II reaction center protein Psb30.